A 175-amino-acid chain; its full sequence is uncharacterized protein (175 aa).

The span at 1-17 (MKVEGGESMHESEEGRD) shows a compositional bias: basic and acidic residues. The segment at 1–21 (MKVEGGESMHESEEGRDVPNG) is disordered.

This is an uncharacterized protein from Bacillus thuringiensis subsp. kurstaki.